Here is a 549-residue protein sequence, read N- to C-terminus: Polycomb group RING finger protein 3 homolog mig-32 (549 aa).

Residues 1-263 form a disordered region; the sequence is MTRKRPALAE…EESMRQKYGQ (263 aa). Residues 12-29 are compositionally biased toward low complexity; it reads VSSSRSRVTRRSTTGAPS. Composition is skewed to acidic residues over residues 38 to 49 and 87 to 100; these read PESDADSEDDYD and MDDDENEEKIDGEV. Positions 118–130 are enriched in basic residues; that stretch reads KTAKLQTKKKKKK. Positions 134 to 144 are enriched in pro residues; it reads PETPPTSPSPS. Residues 145 to 156 are compositionally biased toward low complexity; that stretch reads PSRSVSPSTTKS. Basic and acidic residues predominate over residues 205–235; the sequence is EEIKLRERAERKARRIEEAKNRPKLTIEQKL. Positions 206 to 260 form a coiled coil; sequence EIKLRERAERKARRIEEAKNRPKLTIEQKLAKLRKKKERRERRKEQEKEESMRQK. Over residues 236–247 the composition is skewed to basic residues; that stretch reads AKLRKKKERRER. A compositionally biased stretch (basic and acidic residues) spans 248 to 258; it reads RKEQEKEESMR. The RING-type zinc finger occupies 329–368; it reads CGICDGYIVDATTIIDCMHTFCKSCLLTYFESDNNTCPTC.

Component of a PRC1-like complex.

Its subcellular location is the nucleus. The protein localises to the nucleolus. Its function is as follows. Component of a Polycomb group (PcG) multiprotein PRC1-like complex, a complex class required to maintain the transcriptionally repressive state of many genes, throughout development. Required for ubiquitination of histone H2A. Plays a role in the formation of the male-specific genital sensilla (simple sense organs) known as rays. Required for normal migration of the hermaphrodite specific neurons (HSN) and for extension of some neuronal processes. Represses vulval fates in hypodermal cells that do not normally contribute to vulval development. This is Polycomb group RING finger protein 3 homolog mig-32 from Caenorhabditis elegans.